The chain runs to 103 residues: Pyrimidine/purine nucleoside phosphorylase (103 aa).

The protein belongs to the nucleoside phosphorylase PpnP family.

The catalysed reaction is a purine D-ribonucleoside + phosphate = a purine nucleobase + alpha-D-ribose 1-phosphate. The enzyme catalyses adenosine + phosphate = alpha-D-ribose 1-phosphate + adenine. It catalyses the reaction cytidine + phosphate = cytosine + alpha-D-ribose 1-phosphate. It carries out the reaction guanosine + phosphate = alpha-D-ribose 1-phosphate + guanine. The catalysed reaction is inosine + phosphate = alpha-D-ribose 1-phosphate + hypoxanthine. The enzyme catalyses thymidine + phosphate = 2-deoxy-alpha-D-ribose 1-phosphate + thymine. It catalyses the reaction uridine + phosphate = alpha-D-ribose 1-phosphate + uracil. It carries out the reaction xanthosine + phosphate = alpha-D-ribose 1-phosphate + xanthine. Functionally, catalyzes the phosphorolysis of diverse nucleosides, yielding D-ribose 1-phosphate and the respective free bases. Can use uridine, adenosine, guanosine, cytidine, thymidine, inosine and xanthosine as substrates. Also catalyzes the reverse reactions. In Shewanella sp. (strain ANA-3), this protein is Pyrimidine/purine nucleoside phosphorylase.